A 298-amino-acid chain; its full sequence is 4-hydroxy-tetrahydrodipicolinate synthase (298 aa).

Residue T51 coordinates pyruvate. Y139 serves as the catalytic Proton donor/acceptor. The active-site Schiff-base intermediate with substrate is K167. I209 contacts pyruvate.

The protein belongs to the DapA family. As to quaternary structure, homotetramer; dimer of dimers.

The protein localises to the cytoplasm. It carries out the reaction L-aspartate 4-semialdehyde + pyruvate = (2S,4S)-4-hydroxy-2,3,4,5-tetrahydrodipicolinate + H2O + H(+). The protein operates within amino-acid biosynthesis; L-lysine biosynthesis via DAP pathway; (S)-tetrahydrodipicolinate from L-aspartate: step 3/4. Catalyzes the condensation of (S)-aspartate-beta-semialdehyde [(S)-ASA] and pyruvate to 4-hydroxy-tetrahydrodipicolinate (HTPA). This Haemophilus influenzae (strain PittGG) protein is 4-hydroxy-tetrahydrodipicolinate synthase.